The primary structure comprises 307 residues: MGSTMEPPGGAYLHLGAVTSPVGTARMLQLAFGCTTFSLVAHRGGFGGVQGTFCMAAWGFCFAFSVLVVACEFTRLHSCLRLSWGNFTAAFAMLATLLCATAAVIYPLYFTRLECPPEPAGCMVRNFRLAASVFAGLLFLAYAAEVALTRARPGQVASYMATVSGLLKIVQAFVACIIFGALVHESRYGRYVATQWCVAVYSLCFMATVAVVVLSVMGHTGGLGCPFDRLVVVYTFLAVLLYLSAAVIWPVFCFDPKYGEPGRPSDCPRGSCPWDSQLVVAIFTYVNLLLYIVDLAYSQRIRFVPTL.

2 MARVEL domains span residues 17 to 154 (AVTS…ARPG) and 159 to 303 (YMAT…RIRF). The next 7 membrane-spanning stretches (helical) occupy residues 53–73 (FCMAAWGFCFAFSVLVVACEF), 90–110 (AFAMLATLLCATAAVIYPLYF), 129–149 (LAASVFAGLLFLAYAAEVALT), 163–183 (VSGLLKIVQAFVACIIFGALV), 198–218 (VAVYSLCFMATVAVVVLSVMG), 232–252 (VVYTFLAVLLYLSAAVIWPVF), and 278–298 (LVVAIFTYVNLLLYIVDLAYS).

This sequence belongs to the MAL family.

The protein resides in the membrane. This Rattus norvegicus (Rat) protein is Myeloid-associated differentiation marker-like protein 2 (Myadml2).